The following is a 981-amino-acid chain: Serine/threonine-protein kinase D1044.8 (981 aa).

Positions 453–725 (YELLDQLGAG…MCGVRLLEYL (273 aa)) constitute a Protein kinase domain. ATP is bound by residues 459-467 (LGAGAFGCV) and Lys-488. Catalysis depends on Asp-591, which acts as the Proton acceptor. Over residues 735–746 (TSDMTASQSSYN) the composition is skewed to polar residues. Disordered regions lie at residues 735–802 (TSDM…PSSI) and 823–847 (IPSR…TELK). Over residues 752 to 762 (SPSSLNSSTSS) the composition is skewed to low complexity. Over residues 830–847 (QTCSTEHPARSSSSTELK) the composition is skewed to polar residues.

Belongs to the protein kinase superfamily. NEK Ser/Thr protein kinase family. NIMA subfamily. Requires Mg(2+) as cofactor.

It carries out the reaction L-seryl-[protein] + ATP = O-phospho-L-seryl-[protein] + ADP + H(+). It catalyses the reaction L-threonyl-[protein] + ATP = O-phospho-L-threonyl-[protein] + ADP + H(+). This is Serine/threonine-protein kinase D1044.8 (nekl-4) from Caenorhabditis elegans.